Consider the following 215-residue polypeptide: tRNA (guanine-N(7)-)-methyltransferase (215 aa).

S-adenosyl-L-methionine-binding residues include aspartate 43, glutamate 68, asparagine 95, and aspartate 121. Aspartate 121 is an active-site residue. Substrate is bound by residues lysine 125 and aspartate 157.

Belongs to the class I-like SAM-binding methyltransferase superfamily. TrmB family.

The catalysed reaction is guanosine(46) in tRNA + S-adenosyl-L-methionine = N(7)-methylguanosine(46) in tRNA + S-adenosyl-L-homocysteine. It participates in tRNA modification; N(7)-methylguanine-tRNA biosynthesis. Catalyzes the formation of N(7)-methylguanine at position 46 (m7G46) in tRNA. In Trichormus variabilis (strain ATCC 29413 / PCC 7937) (Anabaena variabilis), this protein is tRNA (guanine-N(7)-)-methyltransferase.